A 202-amino-acid chain; its full sequence is Alcohol dehydrogenase-related 31 kDa protein (202 aa).

11–34 serves as a coordination point for NAD(+); it reads YVADCGGIALETSKVLMTKNIAKL. S139 contacts substrate. Catalysis depends on Y152, which acts as the Proton acceptor.

Belongs to the short-chain dehydrogenases/reductases (SDR) family.

The sequence is that of Alcohol dehydrogenase-related 31 kDa protein (Adhr) from Drosophila erecta (Fruit fly).